Consider the following 221-residue polypeptide: 7-cyano-7-deazaguanine synthase (221 aa).

ATP is bound at residue 8–18; the sequence is LSGGMDSAAVI. Zn(2+) is bound by residues Cys186, Cys196, Cys199, and Cys202.

It belongs to the QueC family. The cofactor is Zn(2+).

The enzyme catalyses 7-carboxy-7-deazaguanine + NH4(+) + ATP = 7-cyano-7-deazaguanine + ADP + phosphate + H2O + H(+). The protein operates within purine metabolism; 7-cyano-7-deazaguanine biosynthesis. Catalyzes the ATP-dependent conversion of 7-carboxy-7-deazaguanine (CDG) to 7-cyano-7-deazaguanine (preQ(0)). This Stenotrophomonas maltophilia (strain K279a) protein is 7-cyano-7-deazaguanine synthase.